The primary structure comprises 467 residues: UDP-glycosyltransferase 90A2 (467 aa).

UDP-alpha-D-glucose is bound by residues Ser289, 341–343 (VDQ), 358–366 (HCGWNSLTE), and 380–383 (AAEQ).

Belongs to the UDP-glycosyltransferase family.

This is UDP-glycosyltransferase 90A2 (UGT90A2) from Arabidopsis thaliana (Mouse-ear cress).